A 283-amino-acid polypeptide reads, in one-letter code: MSERLSITPLGPYIGAQISGADLTRPLSDNQFEQLYHAVLRHQVVFLRDQAITPQQQRALAQRFGELHIHPVYPHAEGVDEIIVLDTHNDNPPDNDNWHTDVTFIETPPAGAILAAKELPSTGGDTLWTSGIAAYEALSVPFRQLLSGLRAEHDFRKSFPEYKYRKTEEEHQRWREAVAKNPPLLHPVVRTHPVSGKQALFVNEGFTTRIVDVSEKESEALLSFLFAHITKPEFQVRWRWQPNDIAIWDNRVTQHYANADYLPQRRIMHRATILGDKPFYRAG.

The taurine site is built by H70, Y73, and N95. Fe cation-binding residues include H99 and D101. V102 lines the taurine pocket. A 2-oxoglutarate-binding site is contributed by T126. W128, W240, and W248 each carry 3-hydroxytryptophan; by autocatalysis. A Fe cation-binding site is contributed by H255. 2-oxoglutarate contacts are provided by H255, R266, and R270. R270 serves as a coordination point for taurine.

This sequence belongs to the TfdA dioxygenase family. Homodimer. Was later shown to be a homotetramer arranged as a dimer of two dimers. Fe(2+) is required as a cofactor.

The enzyme catalyses taurine + 2-oxoglutarate + O2 = aminoacetaldehyde + sulfite + succinate + CO2 + H(+). It functions in the pathway organosulfur degradation; taurine degradation via aerobic pathway; aminoacetaldehyde and sulfite from taurine: step 1/1. Activated by ascorbate and inhibited by divalent metal ions such as zinc, copper and cobalt. Functionally, catalyzes the alpha-ketoglutarate-dependent hydroxylation of taurine yielding sulfite and aminoacetaldehyde after decomposition of an unstable intermediate. Is required for the utilization of taurine (2-aminoethanesulfonate) as an alternative sulfur source for growth in the absence of sulfate. To a lesser extent, pentanesulfonate, 3-(N-morpholino)propanesulfonate and 1,3-dioxo-2-isoindolineethanesulfonate are also desulfonated by this enzyme in vitro; however, desulfonation by TauD of organosulfonates other than taurine seem to be of little or no importance for sulfur metabolism in vivo. This Escherichia coli (strain K12) protein is Alpha-ketoglutarate-dependent taurine dioxygenase (tauD).